Here is a 286-residue protein sequence, read N- to C-terminus: uncharacterized protein (286 aa).

Positions 1–47 (MAIPFLHKGGSDDSTHHHTHDYDHHNHDHHGHDHHSHDSSSNSSSEA) are disordered. The segment covering 9–26 (GGSDDSTHHHTHDYDHHN) has biased composition (basic and acidic residues). Residue 93-100 (GPVGSGKT) coordinates GTP.

Belongs to the SIMIBI class G3E GTPase family. UreG subfamily.

Its subcellular location is the cytoplasm. The protein resides in the nucleus. Functionally, probably facilitates nickel incorporation. This is an uncharacterized protein from Schizosaccharomyces pombe (strain 972 / ATCC 24843) (Fission yeast).